We begin with the raw amino-acid sequence, 287 residues long: Homoserine kinase (287 aa).

Position 79–89 (proline 79–serine 89) interacts with ATP.

This sequence belongs to the GHMP kinase family. Homoserine kinase subfamily.

Its subcellular location is the cytoplasm. It carries out the reaction L-homoserine + ATP = O-phospho-L-homoserine + ADP + H(+). It functions in the pathway amino-acid biosynthesis; L-threonine biosynthesis; L-threonine from L-aspartate: step 4/5. Catalyzes the ATP-dependent phosphorylation of L-homoserine to L-homoserine phosphate. The polypeptide is Homoserine kinase (Enterococcus faecalis (strain ATCC 700802 / V583)).